We begin with the raw amino-acid sequence, 418 residues long: Transmembrane protease serine 11D (418 aa).

Over 1–20 the chain is Cytoplasmic; sequence MYRPARVTSTSRFLNPYVVC. Residues 21–41 form a helical; Signal-anchor for type II membrane protein membrane-spanning segment; that stretch reads FIVVAGVVILAVTIALLVYFL. The Extracellular segment spans residues 42–418; sequence AFDQKSYFYR…LDWIRQQTGI (377 aa). The SEA domain occupies 46 to 163; the sequence is KSYFYRSSFQ…STEITSLTDQ (118 aa). An N-linked (GlcNAc...) asparagine glycan is attached at Asn144. 4 cysteine pairs are disulfide-bonded: Cys173/Cys292, Cys212/Cys228, Cys337/Cys353, and Cys364/Cys393. Residues 187–417 form the Peptidase S1 domain; sequence ILGGTEAEEG…YLDWIRQQTG (231 aa). Active-site charge relay system residues include His227 and Asp272. Ser368 serves as the catalytic Charge relay system.

It belongs to the peptidase S1 family. As to quaternary structure, monomer. Located in the cells of the submucosal serous glands of the bronchi and trachea.

The protein resides in the cell membrane. Its subcellular location is the secreted. Strongly inhibited by diisopropyl fluorophosphate, leupeptin, antipain, aprotinin, and soybean trypsin inhibitor, but hardly inhibited by secretory leukocyte protease inhibitor at 10 microM. May play some biological role in the host defense system on the mucous membrane independently of or in cooperation with other substances in airway mucous or bronchial secretions. Plays a role in the proteolytic processing of ACE2. Proteolytically cleaves and activates the human coronavirus 229E (HCoV-229E) spike glycoprotein which facilitate virus-cell membrane fusions; spike proteins are synthesized and maintained in precursor intermediate folding states and proteolysis permits the refolding and energy release required to create stable virus-cell linkages and membrane coalescence. Preferentially cleaves the C-terminal side of arginine residues at the P1 position of certain peptides, cleaving Boc-Phe-Ser-Arg-4-methylcoumaryl-7-amide most efficiently and having an optimum pH of 8.6 with this substrate. In Homo sapiens (Human), this protein is Transmembrane protease serine 11D (TMPRSS11D).